The chain runs to 342 residues: Inositol-tetrakisphosphate 1-kinase 1 (342 aa).

1D-myo-inositol 6-phosphate is bound by residues lysine 28 and lysine 70. Residues arginine 105 and lysine 155 each coordinate ATP. One can recognise an ATP-grasp domain in the interval 116–332 (DHAADQDSTF…HKDGVGNQQE (217 aa)). The 1D-myo-inositol 6-phosphate site is built by glycine 161 and histidine 166. ATP-binding residues include histidine 166, glutamine 187, and valine 190. 2 residues coordinate 1D-myo-inositol 6-phosphate: lysine 198 and tyrosine 200. Serine 213 serves as a coordination point for ATP. Positions 219-247 (PEDDASAQGSVSFSQVSNLPTERTAEEYY) are catalytic specificity elements (CSE). Residue asparagine 280 participates in 1D-myo-inositol 6-phosphate binding. Aspartate 282 provides a ligand contact to Mg(2+). ATP contacts are provided by isoleucine 296, aspartate 297, and asparagine 299. Aspartate 297 and asparagine 299 together coordinate Mg(2+). 1D-myo-inositol 6-phosphate contacts are provided by asparagine 299, glycine 303, and lysine 306.

Belongs to the ITPK1 family. As to quaternary structure, monomer. The cofactor is Mg(2+). In terms of tissue distribution, expressed in the embryo of 15 day after pollination. Expressed in kernels at earlier stages but at very low levels. Expression in the embryo peaks at 15 days after pollination and then declines. No expression is detected from endosperm and vegetative tissues.

It carries out the reaction 1D-myo-inositol 3,4,5,6-tetrakisphosphate + ATP = 1D-myo-inositol 1,3,4,5,6-pentakisphosphate + ADP + H(+). The catalysed reaction is 1D-myo-inositol 1,3,4-trisphosphate + ATP = 1D-myo-inositol 1,3,4,5-tetrakisphosphate + ADP + H(+). It catalyses the reaction 1D-myo-inositol 1,3,4-trisphosphate + ATP = 1D-myo-inositol 1,3,4,6-tetrakisphosphate + ADP + H(+). The enzyme catalyses 1D-myo-inositol 1,2,3,4,5-pentakisphosphate + ATP = 3-diphospho-1D-myo-inositol 1,2,4,5-tetrakisphosphate + ADP. It carries out the reaction 1D-myo-inositol hexakisphosphate + ATP = 5-diphospho-1D-myo-inositol 1,2,3,4,6-pentakisphosphate + ADP. In terms of biological role, kinase that can phosphorylate various inositol polyphosphate such as Ins(3,4,5,6)P4 or Ins(1,3,4)P3 and participates in phytic acid biosynthesis in developing seeds. Phosphorylates Ins(3,4,5,6)P4 at position 1 to form Ins(1,3,4,5,6)P5. This reaction is thought to have regulatory importance, since Ins(3,4,5,6)P4 is an inhibitor of plasma membrane Ca(2+)-activated Cl(-) channels, while Ins(1,3,4,5,6)P5 is not. Also phosphorylates Ins(1,3,4)P3 on O-5 and O-6 to form Ins(1,3,4,6)P4, an essential molecule in the hexakisphosphate (InsP6) pathway. Also able to phosphorylate Ins(3,5,6)P3 but not Ins(1,4,5)P3, Ins(2,4,5)P3, Ins(1,3,4,6)P4 nor Ins(1,3,5,6)P4. Has higher specific activity on Ins(3,4,5,6)P4 than Ins(1,3,4)P3 and Ins(3,5,6)P3. Can also could use Ins(1,2,5,6)P4 as a substrate. Able to add a beta-phosphate to the 3 positions of Ins(1,2,3,4,5)P5 and to add beta-phosphate to InsP6 to yield 5-InsP7, thus exhibiting InsP6 kinase activity. Also has Ins(1,3,4,5,6)P5 phosphatase activity. This is Inositol-tetrakisphosphate 1-kinase 1 from Zea mays (Maize).